Here is a 537-residue protein sequence, read N- to C-terminus: Cytoplasmic dynein 2 intermediate chain 2 (537 aa).

Serine 15 is subject to Phosphoserine. The interval 80–93 is DYNLL2 binding; that stretch reads RTHADAQVQTEAPE. The segment at 107–132 is DYNLRB1 binding; the sequence is LRLEAFLRRVEAMVIRELNNNWQSHA. 5 WD repeats span residues 216–256, 265–309, 391–431, 434–474, and 481–521; these read EVPS…DPLL, THTD…QLRL, PHGG…PLTS, LSHK…QKPT, and QDGS…TEQG.

The protein belongs to the dynein light intermediate chain family. As to quaternary structure, the cytoplasmic dynein 2 complex consists of two catalytic heavy chains (HCs) and a number of non-catalytic subunits presented by intermediate chains (ICs), light intermediate chains (LICs) and light chains (LCs). Among them, a heavy chain (DYNC2H1), two intermediate chains (DYNC2I2 and DYNC2I1), a light intermediate chain (DYNC2LI1), and a light chain (DYNLT2B) are unique to the cytoplasmic dynein complex 2, but a subset of the light chains are also shared by dynein-1 and dynein-2 complexes. Interacts with DYNC2I1; their C-terminal domains each bind a copy of the heavy chain, and their extended N-terminal regions are held together by an array of light chain dimers. Interacts with DYNLL2; this interaction is essential for dynein-2-mediated retrograde trafficking of ciliary proteins. Interacts with DYNLRB1; this interaction is essential for dynein-2-mediated retrograde trafficking of ciliary proteins. Interacts (via the WD domains) with MAP3K7 and TAB3. Interacts (via WD domains) with TAB2 (via C-terminus). Interacts (via WD domains) with TRAF6 (via TRAF-type domains). Expressed in brain, thymus, heart, lung, liver, spleen, kidney, testis and intestine.

It is found in the cytoplasm. The protein resides in the cytoskeleton. The protein localises to the cilium basal body. It localises to the cilium axoneme. Its subcellular location is the cell projection. It is found in the cilium. The protein resides in the microtubule organizing center. The protein localises to the centrosome. It localises to the filopodium. In terms of biological role, acts as one of several non-catalytic accessory components of the cytoplasmic dynein 2 complex (dynein-2 complex), a motor protein complex that drives the movement of cargos along microtubules within cilia and flagella in concert with the intraflagellar transport (IFT) system. DYNC2I2 plays a major role in retrograde ciliary protein trafficking and in ciliogenesis. Required also to maintain a functional transition zone. Acts as a negative regulator of the Toll-like and IL-1R receptor signaling pathways. Inhibits the MAP3K7-induced NF-kappa-B activation pathway. Inhibits MAP3K7 phosphorylation at 'Thr-184' and 'Thr-187' upon Il-1 beta stimulation. The protein is Cytoplasmic dynein 2 intermediate chain 2 (Dync2i2) of Mus musculus (Mouse).